A 147-amino-acid polypeptide reads, in one-letter code: D-aminoacyl-tRNA deacylase (147 aa).

Positions 137–138 (GP) match the Gly-cisPro motif, important for rejection of L-amino acids motif.

Belongs to the DTD family. Homodimer.

The protein resides in the cytoplasm. It catalyses the reaction glycyl-tRNA(Ala) + H2O = tRNA(Ala) + glycine + H(+). The catalysed reaction is a D-aminoacyl-tRNA + H2O = a tRNA + a D-alpha-amino acid + H(+). Functionally, an aminoacyl-tRNA editing enzyme that deacylates mischarged D-aminoacyl-tRNAs. Also deacylates mischarged glycyl-tRNA(Ala), protecting cells against glycine mischarging by AlaRS. Acts via tRNA-based rather than protein-based catalysis; rejects L-amino acids rather than detecting D-amino acids in the active site. By recycling D-aminoacyl-tRNA to D-amino acids and free tRNA molecules, this enzyme counteracts the toxicity associated with the formation of D-aminoacyl-tRNA entities in vivo and helps enforce protein L-homochirality. The sequence is that of D-aminoacyl-tRNA deacylase from Bacillus pumilus (strain SAFR-032).